Consider the following 429-residue polypeptide: Chaperone SurA (429 aa).

An N-terminal signal peptide occupies residues 1-18 (MFKRIALVCALFSGVCFA). PpiC domains follow at residues 170–271 (NLTY…KLVA) and 281–380 (ITQT…EVIA).

It localises to the periplasm. It catalyses the reaction [protein]-peptidylproline (omega=180) = [protein]-peptidylproline (omega=0). In terms of biological role, chaperone involved in the correct folding and assembly of outer membrane proteins. Recognizes specific patterns of aromatic residues and the orientation of their side chains, which are found more frequently in integral outer membrane proteins. May act in both early periplasmic and late outer membrane-associated steps of protein maturation. The sequence is that of Chaperone SurA from Legionella pneumophila subsp. pneumophila (strain Philadelphia 1 / ATCC 33152 / DSM 7513).